A 313-amino-acid polypeptide reads, in one-letter code: MPSYRAPKIAAAEITPERFFLDRRTFIAAAAGSLALSVPKPSRAAALEASKSTYRADDPATPEKDATTYNNFYEFGTGKGDPAANSANFKPAPWTVKVDGLVGKPREFGLEELLAFPLEERIYRMRCVEAWSMVIPWIGFPLAALLDRVEPLGSAKYVAFETVVRPEEMPGQSGYFQPLEWPYREGLRLDEARHPLTILSVGLYGKTLPNQNGAPIRLVVPWKYGFKGIKSIVRISLTETPPPCTWNLAGPSEYGFYANVNPAVDHPRWSQATENRIGEGGFFGANRRDTLPFNGYAEDVASLYAGMDLRVNF.

A signal peptide (tat-type signal) is located at residues Met-1–Ala-46. Mo-molybdopterin contacts are provided by residues Asn-70, Tyr-73 to Glu-74, Cys-127, Thr-162, Asn-212, Arg-217, and Gly-228 to Lys-230.

It belongs to the MsrP family. Heterodimer of a catalytic subunit (MsrP) and a heme-binding subunit (MsrQ). Requires Mo-molybdopterin as cofactor. In terms of processing, predicted to be exported by the Tat system. The position of the signal peptide cleavage has not been experimentally proven.

The protein resides in the periplasm. The enzyme catalyses L-methionyl-[protein] + a quinone + H2O = L-methionyl-(S)-S-oxide-[protein] + a quinol. It catalyses the reaction L-methionyl-[protein] + a quinone + H2O = L-methionyl-(R)-S-oxide-[protein] + a quinol. Its function is as follows. Part of the MsrPQ system that repairs oxidized periplasmic proteins containing methionine sulfoxide residues (Met-O), using respiratory chain electrons. Thus protects these proteins from oxidative-stress damage caused by reactive species of oxygen and chlorine generated by the host defense mechanisms. MsrPQ is essential for the maintenance of envelope integrity under bleach stress, rescuing a wide series of structurally unrelated periplasmic proteins from methionine oxidation. The catalytic subunit MsrP is non-stereospecific, being able to reduce both (R-) and (S-) diastereoisomers of methionine sulfoxide. The chain is Protein-methionine-sulfoxide reductase catalytic subunit MsrP from Rhizobium meliloti (strain 1021) (Ensifer meliloti).